The following is a 394-amino-acid chain: N-acetylgalactosamine-6-phosphate deacetylase (394 aa).

Residue E137 participates in Zn(2+) binding. Residue 148–149 participates in substrate binding; that stretch reads CH. The Zn(2+) site is built by H201 and H222. Substrate is bound by residues 225–226, R233, and 254–257; these read NG and DGQH. D280 functions as the Proton donor/acceptor in the catalytic mechanism. Position 313–315 (313–315) interacts with substrate; that stretch reads LAG.

It belongs to the metallo-dependent hydrolases superfamily. NagA family.

Its subcellular location is the cytoplasm. The enzyme catalyses N-acetyl-D-galactosamine 6-phosphate + H2O = D-galactosamine 6-phosphate + acetate. It carries out the reaction N-acetyl-D-glucosamine 6-phosphate + H2O = D-glucosamine 6-phosphate + acetate. Its function is as follows. Involved in the pathway of N-acetyl-D-galactosamine degradation. Catalyzes the conversion of N-acetyl-D-galactosamine 6-phosphate to D-galactosamine 6-phosphate and acetate. It can also catalyze the conversion of N-acetyl-D-glucosamine 6-phosphate. The chain is N-acetylgalactosamine-6-phosphate deacetylase from Shewanella sp. (strain ANA-3).